The chain runs to 495 residues: Trimethylamine methyltransferase MttB1 (495 aa).

A non-standard amino acid (pyrrolysine) is located at residue O334.

The protein belongs to the trimethylamine methyltransferase family. In terms of assembly, can form a complex with MttC.

The catalysed reaction is Co(I)-[trimethylamine-specific corrinoid protein] + trimethylamine + H(+) = methyl-Co(III)-[trimethylamine-specific corrinoid protein] + dimethylamine. It participates in one-carbon metabolism; methanogenesis from trimethylamine. Functionally, catalyzes the transfer of a methyl group from trimethylamine to the corrinoid cofactor of MttC. The sequence is that of Trimethylamine methyltransferase MttB1 (mttB1) from Methanosarcina acetivorans (strain ATCC 35395 / DSM 2834 / JCM 12185 / C2A).